Here is a 731-residue protein sequence, read N- to C-terminus: T-cell activation Rho GTPase-activating protein (731 aa).

The Rho-GAP domain occupies 88–277; sequence QPLSIICGDS…FLIDNCFEIF (190 aa). Disordered regions lie at residues 288 to 421, 464 to 507, and 641 to 662; these read TSDD…AEDP, SLDA…IKKH, and HHVE…GLSP. Positions 299 to 311 are enriched in polar residues; that stretch reads SDVSTLQNDSAYD. The segment covering 319–329 has biased composition (low complexity); the sequence is SNSSSGISSPS. The span at 380–399 shows a compositional bias: polar residues; that stretch reads SMPSSQECLESRVTNQTLTK. S400 bears the Phosphoserine mark. Over residues 464 to 480 the composition is skewed to low complexity; it reads SLDASSDSSPVASPSSP. 2 stretches are compositionally biased toward basic and acidic residues: residues 494–503 and 641–652; these read KTEKGKPSRE and HHVEDSRHRGSK.

Its function is as follows. May function as a GTPase-activating protein and may play important roles during T-cell activation. This chain is T-cell activation Rho GTPase-activating protein (TAGAP), found in Homo sapiens (Human).